A 424-amino-acid polypeptide reads, in one-letter code: Glutamyl-tRNA reductase (424 aa).

Residues 49–52 (TCNR), Ser105, 110–112 (EPQ), and Gln116 contribute to the substrate site. The active-site Nucleophile is Cys50. NADP(+) is bound at residue 185–190 (GSGETA).

This sequence belongs to the glutamyl-tRNA reductase family. Homodimer.

It catalyses the reaction (S)-4-amino-5-oxopentanoate + tRNA(Glu) + NADP(+) = L-glutamyl-tRNA(Glu) + NADPH + H(+). It functions in the pathway porphyrin-containing compound metabolism; protoporphyrin-IX biosynthesis; 5-aminolevulinate from L-glutamyl-tRNA(Glu): step 1/2. Its function is as follows. Catalyzes the NADPH-dependent reduction of glutamyl-tRNA(Glu) to glutamate 1-semialdehyde (GSA). The chain is Glutamyl-tRNA reductase from Legionella pneumophila (strain Paris).